A 298-amino-acid chain; its full sequence is Proline iminopeptidase (298 aa).

Residues 26 to 277 (VLLLHGGPAM…NGSHLAMWDD (252 aa)) enclose the AB hydrolase-1 domain. Residue serine 103 is the Nucleophile of the active site. Aspartate 244 is a catalytic residue. The Proton donor role is filled by histidine 271.

Belongs to the peptidase S33 family. In terms of assembly, monomer.

The enzyme catalyses Release of N-terminal proline from a peptide.. Releases the N-terminal proline from various substrates. Cleaves specifically Pro-betaNA and small peptides containing proline at the amino terminal. No activity against hydroxyproline-betaNA. The sequence is that of Proline iminopeptidase (fpaP) from Elizabethkingia meningoseptica (Chryseobacterium meningosepticum).